The following is a 514-amino-acid chain: Maltose/maltodextrin transport system permease protein MalF (514 aa).

The Cytoplasmic portion of the chain corresponds to 1–16 (MDVIKKKHWWQSDQLK). A helical transmembrane segment spans residues 17 to 36 (WSVIGLLGLLVGYLVVLMYV). The Periplasmic segment spans residues 37-39 (QGE). Residues 40–57 (YLFAIMTLILSSAGLYIF) traverse the membrane as a helical segment. Residues 58-69 (ANRKTYAWRYVY) are Cytoplasmic-facing. The chain crosses the membrane as a helical span at residues 70 to 92 (PGLAGMGLFVLFPLVCTIAIAFT). Over 93-283 (NYSSTNQLTF…QKPFFAIFVW (191 aa)) the chain is Periplasmic. Positions 281 to 505 (FVWTVVFSVL…LLVGALAIVN (225 aa)) constitute an ABC transmembrane type-1 domain. Residues 284 to 306 (TVVFSVLTVVLTVAVGMVLACLV) form a helical membrane-spanning segment. The Cytoplasmic portion of the chain corresponds to 307–318 (QWEALKGKAIYR). The chain crosses the membrane as a helical span at residues 319-341 (VLLILPYAVPSFISILIFKGLFN). The Periplasmic segment spans residues 342–369 (QSFGEINMMLSALFGIKPAWFSDPNTAR). A helical transmembrane segment spans residues 370–392 (AMVIIVNTWLGYPYMMILCMGLL). Topologically, residues 393–412 (KAIPDDLYEASAMDGAGPFQ) are cytoplasmic. Residues 413–435 (NFFKITLPLLIKPLTPLMIASFA) traverse the membrane as a helical segment. The Periplasmic portion of the chain corresponds to 436–483 (FNFNNFVLIQLLTNGGPDRLGTTTPAGYTDLLVSYTYRIAFEGGGGQD). A helical transmembrane segment spans residues 484-506 (FGLAAAIATLIFLLVGALAIVNL). At 507-514 (KATRMKFD) the chain is on the cytoplasmic side.

This sequence belongs to the binding-protein-dependent transport system permease family. MalFG subfamily. In terms of assembly, the complex is composed of two ATP-binding proteins (MalK), two transmembrane proteins (MalG and MalF) and a solute-binding protein (MalE).

It is found in the cell inner membrane. Functionally, part of the ABC transporter complex MalEFGK involved in maltose/maltodextrin import. Probably responsible for the translocation of the substrate across the membrane. The sequence is that of Maltose/maltodextrin transport system permease protein MalF (malF) from Salmonella typhi.